A 320-amino-acid chain; its full sequence is Polyadenylate-binding protein-interacting protein 13 (320 aa).

The disordered stretch occupies residues 1–44; it reads MAVAENVGVKVDSSNNQNIDNNTTSLVETKPSCSDDQTPKSKSS. Polar residues predominate over residues 12–44; that stretch reads DSSNNQNIDNNTTSLVETKPSCSDDQTPKSKSS. The short motif at 65–75 is the PAM2-like element; sequence HLNPMAKEFVP. RRM domains lie at 137–212 and 234–310; these read RTVY…MSKT and KTVY…PSKT.

This Arabidopsis thaliana (Mouse-ear cress) protein is Polyadenylate-binding protein-interacting protein 13 (CID13).